Here is a 157-residue protein sequence, read N- to C-terminus: CASP-like protein 1 (157 aa).

Topologically, residues 1–13 (MKTEARDGGSEWR) are cytoplasmic. Residues 14-34 (WVAIFELFLRLAAIVSTSVAV) traverse the membrane as a helical segment. At 35–40 (YAAMGK) the chain is on the extracellular side. A helical transmembrane segment spans residues 41–61 (IFVVAVNGVACFYLLMSLPVS). Residues 62–82 (IFNIMRPHAYPANRVFLNIMD) lie on the Cytoplasmic side of the membrane. Residues 83–103 (MVMVALVTAGALAAGIVYLVE) form a helical membrane-spanning segment. Residues 104–121 (KAGNARASWVSVWSQFDS) are Extracellular-facing. Residues 122 to 142 (SSCFAVLALILHVLLSGVILY) form a helical membrane-spanning segment. At 143 to 157 (KQALNIKFKKLDSVD) the chain is on the cytoplasmic side.

Belongs to the Casparian strip membrane proteins (CASP) family. As to quaternary structure, homodimer and heterodimers.

Its subcellular location is the cell membrane. The protein is CASP-like protein 1 of Picea sitchensis (Sitka spruce).